The sequence spans 346 residues: MPGDVGEETLEIGAVVGKRYKVVQKLGEGGCGSVFKVEDTSEKGQHYALKVEFKSQDAGNILKMEVQILSQLISKKHVAKCVASGKKERYSYMVMTLLGESLDSLLKKHGPFLNVSTQVRIGICILFGIKQVHDIGYLHRDLKPANVAMGCKGSADERYFLVLDFGLARQYIADEDDGLKMRRPREKTYFRGTARYCSVAMHDRYEQGRVDDLWALVYILAEMRCRLAWHDVDDKVEIGEMKRKIHDEVLFAKSPVQMLSFVKTVRSTLFYHRPDYEKLFKLLEDVMKCANYKWSDPYHWEPEKKKNPASQGNKFGLGKKGTKESGELPEASFFTVDDFNTNPLGF.

Positions 20 to 287 (YKVVQKLGEG…KLFKLLEDVM (268 aa)) constitute a Protein kinase domain. Residues 26 to 34 (LGEGGCGSV) and K50 contribute to the ATP site. The Proton acceptor role is filled by D141. The tract at residues 302–326 (PEKKKNPASQGNKFGLGKKGTKESG) is disordered.

The protein belongs to the protein kinase superfamily. Ser/Thr protein kinase family.

It carries out the reaction L-seryl-[protein] + ATP = O-phospho-L-seryl-[protein] + ADP + H(+). It catalyses the reaction L-threonyl-[protein] + ATP = O-phospho-L-threonyl-[protein] + ADP + H(+). This is Putative serine/threonine-protein kinase K06H7.1 from Caenorhabditis elegans.